Reading from the N-terminus, the 367-residue chain is UDP-N-acetylglucosamine--N-acetylmuramyl-(pentapeptide) pyrophosphoryl-undecaprenol N-acetylglucosamine transferase (367 aa).

UDP-N-acetyl-alpha-D-glucosamine is bound by residues 15–17 (TGG), Asn-127, Arg-163, Ser-191, Ile-249, and Gln-294.

The protein belongs to the glycosyltransferase 28 family. MurG subfamily.

It is found in the cell inner membrane. The catalysed reaction is di-trans,octa-cis-undecaprenyl diphospho-N-acetyl-alpha-D-muramoyl-L-alanyl-D-glutamyl-meso-2,6-diaminopimeloyl-D-alanyl-D-alanine + UDP-N-acetyl-alpha-D-glucosamine = di-trans,octa-cis-undecaprenyl diphospho-[N-acetyl-alpha-D-glucosaminyl-(1-&gt;4)]-N-acetyl-alpha-D-muramoyl-L-alanyl-D-glutamyl-meso-2,6-diaminopimeloyl-D-alanyl-D-alanine + UDP + H(+). The protein operates within cell wall biogenesis; peptidoglycan biosynthesis. Its function is as follows. Cell wall formation. Catalyzes the transfer of a GlcNAc subunit on undecaprenyl-pyrophosphoryl-MurNAc-pentapeptide (lipid intermediate I) to form undecaprenyl-pyrophosphoryl-MurNAc-(pentapeptide)GlcNAc (lipid intermediate II). The sequence is that of UDP-N-acetylglucosamine--N-acetylmuramyl-(pentapeptide) pyrophosphoryl-undecaprenol N-acetylglucosamine transferase from Burkholderia thailandensis (strain ATCC 700388 / DSM 13276 / CCUG 48851 / CIP 106301 / E264).